A 200-amino-acid polypeptide reads, in one-letter code: Large ribosomal subunit protein bL25 (200 aa).

The protein belongs to the bacterial ribosomal protein bL25 family. CTC subfamily. In terms of assembly, part of the 50S ribosomal subunit; part of the 5S rRNA/L5/L18/L25 subcomplex. Contacts the 5S rRNA. Binds to the 5S rRNA independently of L5 and L18.

In terms of biological role, this is one of the proteins that binds to the 5S RNA in the ribosome where it forms part of the central protuberance. The sequence is that of Large ribosomal subunit protein bL25 from Nocardia farcinica (strain IFM 10152).